A 474-amino-acid chain; its full sequence is Aspartyl/glutamyl-tRNA(Asn/Gln) amidotransferase subunit B (474 aa).

Belongs to the GatB/GatE family. GatB subfamily. In terms of assembly, heterotrimer of A, B and C subunits.

It catalyses the reaction L-glutamyl-tRNA(Gln) + L-glutamine + ATP + H2O = L-glutaminyl-tRNA(Gln) + L-glutamate + ADP + phosphate + H(+). The catalysed reaction is L-aspartyl-tRNA(Asn) + L-glutamine + ATP + H2O = L-asparaginyl-tRNA(Asn) + L-glutamate + ADP + phosphate + 2 H(+). Its function is as follows. Allows the formation of correctly charged Asn-tRNA(Asn) or Gln-tRNA(Gln) through the transamidation of misacylated Asp-tRNA(Asn) or Glu-tRNA(Gln) in organisms which lack either or both of asparaginyl-tRNA or glutaminyl-tRNA synthetases. The reaction takes place in the presence of glutamine and ATP through an activated phospho-Asp-tRNA(Asn) or phospho-Glu-tRNA(Gln). The protein is Aspartyl/glutamyl-tRNA(Asn/Gln) amidotransferase subunit B of Helicobacter hepaticus (strain ATCC 51449 / 3B1).